A 1403-amino-acid polypeptide reads, in one-letter code: DNA-directed RNA polymerase subunit beta' (1403 aa).

The Zn(2+) site is built by Cys-71, Cys-73, Cys-86, and Cys-89. 3 residues coordinate Mg(2+): Asp-462, Asp-464, and Asp-466. Cys-811, Cys-885, Cys-892, and Cys-895 together coordinate Zn(2+).

The protein belongs to the RNA polymerase beta' chain family. The RNAP catalytic core consists of 2 alpha, 1 beta, 1 beta' and 1 omega subunit. When a sigma factor is associated with the core the holoenzyme is formed, which can initiate transcription. It depends on Mg(2+) as a cofactor. Zn(2+) serves as cofactor.

It carries out the reaction RNA(n) + a ribonucleoside 5'-triphosphate = RNA(n+1) + diphosphate. In terms of biological role, DNA-dependent RNA polymerase catalyzes the transcription of DNA into RNA using the four ribonucleoside triphosphates as substrates. This Bartonella bacilliformis (strain ATCC 35685 / KC583 / Herrer 020/F12,63) protein is DNA-directed RNA polymerase subunit beta'.